The primary structure comprises 840 residues: DNA mismatch repair protein MutS (840 aa).

Residue 601-608 coordinates ATP; sequence GPNMSGKS.

The protein belongs to the DNA mismatch repair MutS family.

In terms of biological role, this protein is involved in the repair of mismatches in DNA. It is possible that it carries out the mismatch recognition step. This protein has a weak ATPase activity. The chain is DNA mismatch repair protein MutS from Lactococcus lactis subsp. cremoris (strain SK11).